A 1148-amino-acid chain; its full sequence is MSVPDYMQCAEDHQTLLVVVQAVGIVSEENFFRIYKRICSVSQLSVRDTQRALFIRYRHHYPPENNEWGDFQTHRKVVGLITITDCFSPKDWPQTFEKFHVQKEIYGSTLYDSRLFVFGLQGDVAEQPRPDVAFYPNYDDCDSVEKRIEDFIESLFIVLESKRLDRATDKSGDKIPLLCVPFEKKDFVGLDTDSRHYKKRCQGRMRKHVGDLCLQAGMLQDALVHYHMSVELLRSVNDFLWLGAALEGLCSASVIYHYPGGTGGKTGARRLQGSSLPSEAANRHRPGAQEVLIDPGALTTNGINPDTSTEIGRAKNCLSPEDIIDKYKEAISYYSKYKNAGVIELEACVKAVRVLAIQKRGMEASEFLQNAVYINLRQLSEEEKIQRYSILSELYELIGFHRKSAFFKRVAAMQCVAPSIAEPGWRACYKLLLETLPGYSLSLDPKDFSKGTHRGWAAVQMRLLHELVYASRRMGNPALSVRHLSFLLQTMLDFLSDQEKKDVTQSLENYTAKCPGTMEPITLPDGLTLPPVPFTKLPIVRCVKLLSLPTSLRPHKVKSLLGQSMSTKSPFIYSPIIAHNRGEERNKKIDFQWVQGDVCEVQLMVYNPMPFELRVENMGLLTSGVEFESLPAALSLPAESGLYPVTLVGVPQTTGMITVNGYHTTVFGVFSDCLLDNLPGLKTGGSTVEVIPALPRLQISTSLPRSARSLQPSAGDEIATNVSVQLYNGETQQLAVTLENIGLEPLEQLEVTSKLLTTKEKLYGDFLSWKLEETLAQFPLQPGKVATFTINIKAKLDFSCQENLLQDLSDDGISVSGFPLSSPFRQVVRPRVESRPTNPSEGSKTGDLGHVKTLEAVLNFKYSGGPGHVEGYYRNLSLGLHVEVEPSVFFTRVSTLPATSTRQCHLLLDVFNSTEHELTVCARNNSELVLHASECQRMAIQVDKFNFESVPESPGEKGHFANLKQLEEERQEARGLEISSKLDIRWRIPSLKRSGEASVEGLLNQLILEHLQLAPLQWDVLVDGQPCDCEVAAACQVGDPVRLEVRLTNRSPRSVGPFALTVVPFQDHQNGVHNYDLHDVISFVGSSTFYLDTVQPSGQSTCLGALLFLYTGDFFLNIRFHEDCKSKELPPSWVCLPSVHVRALGAQA.

Phosphoserine occurs at positions 566 and 953.

The protein belongs to the NIBP family. In terms of assembly, component of the multisubunit TRAPP (transport protein particle) complex, which includes at least TRAPPC2, TRAPPC2L, TRAPPC3, TRAPPC3L, TRAPPC4, TRAPPC5, TRAPPC8, TRAPPC9, TRAPPC10, TRAPPC11 and TRAPPC12. Directly interacts with IKBKB and MAP3K14. As to expression, expressed in neurons of the pyramidal layer of the cortex, in spinal cord motor neurons and white matter neurons (at protein level).

Its subcellular location is the golgi apparatus. The protein localises to the cis-Golgi network. The protein resides in the endoplasmic reticulum. It localises to the cytoplasm. Functionally, functions as an activator of NF-kappa-B through increased phosphorylation of the IKK complex. May function in neuronal cells differentiation. May play a role in vesicular transport from endoplasmic reticulum to Golgi. The protein is Trafficking protein particle complex subunit 9 (Trappc9) of Mus musculus (Mouse).